A 65-amino-acid polypeptide reads, in one-letter code: MANAQQQVFGGGGGDDAENNDAPQQGSGTQQVNVTGTDDLLDEIDGLLETNAEEFVRSYVQKGGQ.

The interval 1–38 (MANAQQQVFGGGGGDDAENNDAPQQGSGTQQVNVTGTD) is disordered. An ARC ATPase binding region spans residues 21-59 (DAPQQGSGTQQVNVTGTDDLLDEIDGLLETNAEEFVRSY). Residues 22–34 (APQQGSGTQQVNV) show a composition bias toward polar residues. Q65 is modified (deamidated glutamine). Q65 participates in a covalent cross-link: Isoglutamyl lysine isopeptide (Gln-Lys) (interchain with K-? in acceptor proteins).

It belongs to the prokaryotic ubiquitin-like protein family. As to quaternary structure, strongly interacts with the proteasome-associated ATPase ARC through a hydrophobic interface; the interacting region of Pup lies in its C-terminal half. There is one Pup binding site per ARC hexamer ring. Post-translationally, is modified by deamidation of its C-terminal glutamine to glutamate by the deamidase Dop, a prerequisite to the subsequent pupylation process.

The protein operates within protein degradation; proteasomal Pup-dependent pathway. Its function is as follows. Protein modifier that is covalently attached to lysine residues of substrate proteins, thereby targeting them for proteasomal degradation. The tagging system is termed pupylation. This chain is Prokaryotic ubiquitin-like protein Pup, found in Corynebacterium urealyticum (strain ATCC 43042 / DSM 7109).